Consider the following 227-residue polypeptide: Probable methylthioribulose-1-phosphate dehydratase (227 aa).

Residue Cys-87 coordinates substrate. The Zn(2+) site is built by His-105 and His-107. Glu-129 acts as the Proton donor/acceptor in catalysis. Zn(2+) is bound at residue His-185.

This sequence belongs to the aldolase class II family. MtnB subfamily. It depends on Zn(2+) as a cofactor.

The protein localises to the cytoplasm. It catalyses the reaction 5-(methylsulfanyl)-D-ribulose 1-phosphate = 5-methylsulfanyl-2,3-dioxopentyl phosphate + H2O. It functions in the pathway amino-acid biosynthesis; L-methionine biosynthesis via salvage pathway; L-methionine from S-methyl-5-thio-alpha-D-ribose 1-phosphate: step 2/6. Its function is as follows. Catalyzes the dehydration of methylthioribulose-1-phosphate (MTRu-1-P) into 2,3-diketo-5-methylthiopentyl-1-phosphate (DK-MTP-1-P). This chain is Probable methylthioribulose-1-phosphate dehydratase, found in Drosophila melanogaster (Fruit fly).